The following is a 356-amino-acid chain: DNA polymerase IV (356 aa).

Residues 6–186 form the UmuC domain; sequence IVHIDMDAFY…LPVDAFHGIG (181 aa). Positions 10 and 104 each coordinate Mg(2+). Glu-105 is a catalytic residue.

This sequence belongs to the DNA polymerase type-Y family. As to quaternary structure, monomer. Requires Mg(2+) as cofactor.

Its subcellular location is the cytoplasm. It carries out the reaction DNA(n) + a 2'-deoxyribonucleoside 5'-triphosphate = DNA(n+1) + diphosphate. In terms of biological role, poorly processive, error-prone DNA polymerase involved in untargeted mutagenesis. Copies undamaged DNA at stalled replication forks, which arise in vivo from mismatched or misaligned primer ends. These misaligned primers can be extended by PolIV. Exhibits no 3'-5' exonuclease (proofreading) activity. May be involved in translesional synthesis, in conjunction with the beta clamp from PolIII. The chain is DNA polymerase IV from Gluconobacter oxydans (strain 621H) (Gluconobacter suboxydans).